Reading from the N-terminus, the 349-residue chain is Arginine kinase (349 aa).

The Phosphagen kinase N-terminal domain occupies 3-85 (DLAELWEKVS…LGPVILDYHK (83 aa)). 58–62 (GVGVY) lines the substrate pocket. Residues 113–349 (WIVSTRVRVG…EEIIKLEKAA (237 aa)) enclose the Phosphagen kinase C-terminal domain. ATP-binding positions include 116–120 (STRVR) and histidine 179. A substrate-binding site is contributed by glutamate 219. Arginine 223 provides a ligand contact to ATP. Position 265 (cysteine 265) interacts with substrate. ATP is bound by residues 274-278 (RASVH) and 302-307 (RGIHGE). Glutamate 307 provides a ligand contact to substrate.

It belongs to the ATP:guanido phosphotransferase family.

It catalyses the reaction L-arginine + ATP = N(omega)-phospho-L-arginine + ADP + H(+). The chain is Arginine kinase from Liolophura japonica (Chiton).